A 420-amino-acid polypeptide reads, in one-letter code: Ribosome biogenesis protein WDR12 homolog (420 aa).

The ubiquitin-like (UBL) domain stretch occupies residues 10–92 (VQVHLKTKQE…EDAIEIEYVE (83 aa)). 7 WD repeats span residues 104–142 (LHDDWVSAVKARGKWILSGCYDNSLNLWTNKGKHILTIS), 143–185 (GHTA…NAVD), 192–231 (GHERGVDSVSVSPDGLRFATGSWDTMLKVWSAELDDGVEG), 250–288 (GHRESVSAVQWMDATTLLTGSWDYTLKVWDLSLEGIKTE), 290–329 (STNKSIFDASYSKLNRLILTASADKNLRLYDPRTNQGSVV), 335–375 (GHNA…APLY), and 379–417 (GHGDKVLDIDWSNPKYIVSGGVDNSVRVFKSRKALAEDT).

It belongs to the WD repeat WDR12/YTM1 family.

It localises to the nucleus. The protein resides in the nucleolus. Its subcellular location is the nucleoplasm. Its function is as follows. Required for maturation of ribosomal RNAs and formation of the large ribosomal subunit. The polypeptide is Ribosome biogenesis protein WDR12 homolog (Drosophila simulans (Fruit fly)).